We begin with the raw amino-acid sequence, 658 residues long: Biosynthetic arginine decarboxylase (658 aa).

Lys127 carries the post-translational modification N6-(pyridoxal phosphate)lysine. Residue 307–317 (FDVGGGLGVDY) participates in substrate binding.

Belongs to the Orn/Lys/Arg decarboxylase class-II family. SpeA subfamily. Requires Mg(2+) as cofactor. The cofactor is pyridoxal 5'-phosphate.

The catalysed reaction is L-arginine + H(+) = agmatine + CO2. It participates in amine and polyamine biosynthesis; agmatine biosynthesis; agmatine from L-arginine: step 1/1. Catalyzes the biosynthesis of agmatine from arginine. In Salmonella typhi, this protein is Biosynthetic arginine decarboxylase.